The primary structure comprises 106 residues: uncharacterized protein (106 aa).

A signal peptide spans 1-31 (MNNERLMLKGIFLGAAAGAALSLLHKPTRQA). Residues 57 to 89 (VITKVDEAKKLARTLSKEVDFVNQQVKELKKTT) adopt a coiled-coil conformation.

This is an uncharacterized protein from Bacillus subtilis (strain 168).